The following is a 246-amino-acid chain: Probable transcriptional regulatory protein YebC (246 aa).

The disordered stretch occupies residues 1 to 20 (MAGHSKWANTRHRKAAQDAK).

It belongs to the TACO1 family.

It localises to the cytoplasm. The polypeptide is Probable transcriptional regulatory protein YebC (Shigella flexneri).